An 80-amino-acid polypeptide reads, in one-letter code: MSQEAILEKVRSIVTEQLSVEAGEVKPESSFQNDLGADSLDTVELVMALEEAFDIEIPDEAAEGITTVGDAVKYIEDKQA.

The Carrier domain maps to 4-79 (EAILEKVRSI…DAVKYIEDKQ (76 aa)). Residue S39 is modified to O-(pantetheine 4'-phosphoryl)serine.

It belongs to the acyl carrier protein (ACP) family. In terms of processing, 4'-phosphopantetheine is transferred from CoA to a specific serine of apo-ACP by AcpS. This modification is essential for activity because fatty acids are bound in thioester linkage to the sulfhydryl of the prosthetic group.

It localises to the cytoplasm. Its pathway is lipid metabolism; fatty acid biosynthesis. Carrier of the growing fatty acid chain in fatty acid biosynthesis. The polypeptide is Acyl carrier protein (Prochlorococcus marinus (strain MIT 9313)).